The primary structure comprises 1702 residues: MRDEVDLSLTIPSKLLGKRDREQKNCEEEKNKNKKAKKQQKDPILLHTSAATHKFLPPPLTMPYSEIGDDLRSLDFDHADVSSDLHLTSSSSVSSFSSSSSSLFSAAGTDDPSPKMEKDPRKIARRYQVELCKKATEENVIVYLGTGCGKTHIAVMLIYELGHLVLSPKKSVCIFLAPTVALVEQQAKVIADSVNFKVAIHCGGKRIVKSHSEWEREIAANEVLVMTPQILLHNLQHCFIKMECISLLIFDECHHAQQQSNHPYAEIMKVFYKSESLQRPRIFGMTASPVVGKGSFQSENLSKSINSLENLLNAKVYSVESNVQLDGFVSSPLVKVYYYRSALSDASQSTIRYENMLEDIKQRCLASLKLLIDTHQTQTLLSMKRLLKRSHDNLIYTLLNLGLWGAIQAAKIQLNSDHNVQDEPVGKNPKSKICDTYLSMAAEALSSGVAKDENASDLLSLAALKEPLFSRKLVQLIKILSVFRLEPHMKCIIFVNRIVTARTLSCILNNLELLRSWKSDFLVGLSSGLKSMSRRSMETILKRFQSKELNLLVATKVGEEGLDIQTCCLVIRYDLPETVTSFIQSRGRARMPQSEYAFLVDSGNEKEMDLIENFKVNEDRMNLEITYRSSEETCPRLDEELYKVHETGACISGGSSISLLYKYCSRLPHDEFFQPKPEFQFKPVDEFGGTICRITLPANAPISEIESSLLPSTEAAKKDACLKAVHELHNLGVLNDFLLPDSKDEIEDELSDDEFDFDNIKGEGCSRGDLYEMRVPVLFKQKWDPSTSCVNLHSYYIMFVPHPADRIYKKFGFFMKSPLPVEAETMDIDLHLAHQRSVSVKIFPSGVTEFDNDEIRLAELFQEIALKVLFERGELIPDFVPLELQDSSRTSKSTFYLLLPLCLHDGESVISVDWVTIRNCLSSPIFKTPSVLVEDIFPPSGSHLKLANGCWNIDDVKNSLVFTTYSKQFYFVADICHGRNGFSPVKESSTKSHVESIYKLYGVELKHPAQPLLRVKPLCHVRNLLHNRMQTNLEPQELDEYFIEIPPELSHLKIKGLSKDIGSSLSLLPSIMHRMENLLVAIELKHVLSASIPEIAEVSGHRVLEALTTEKCHERLSLERLEVLGDAFLKFAVSRHLFLHHDSLDEGELTRRRSNVVNNSNLCRLAIKKNLQVYIRDQALDPTQFFAFGHPCRVTCDEVASKEVHSLNRDLGILESNTGEIRCSKGHHWLYKKTIADVVEALVGAFLVDSGFKGAVKFLKWIGVNVDFESLQVQDACIASRRYLPLTTRNNLETLENQLDYKFLHKGLLVQAFIHPSYNRHGGGCYQRLEFLGDAVLDYLMTSYFFTVFPKLKPGQLTDLRSLSVNNEALANVAVSFSLKRFLFCESIYLHEVIEDYTNFLASSPLASGQSEGPRCPKVLGDLVESCLGALFLDCGFNLNHVWTMMLSFLDPVKNLSNLQISPIKELIELCQSYKWDREISATKKDGAFTVELKVTKNGCCLTVSATGRNKREGTKKAAQLMITNLKAHENITTSHPLEDVLKNGIRNEAKLIGYNEDPIDVVDLVGLDVENLNILETFGGNSERSSSYVIRRGLPQAPSKTEDRLPQKAIIKAGGPSSKTAKSLLHETCVANCWKPPHFECCEEEGPGHLKSFVYKVILEVEDAPNMTLECYGEARATKKGAAEHAAQAAIWCLKHSGFLC.

2 disordered regions span residues methionine 1–threonine 52 and serine 89–proline 120. Positions glycine 17–asparagine 31 are enriched in basic and acidic residues. Residues serine 89 to serine 105 are compositionally biased toward low complexity. The region spanning leucine 131 to serine 307 is the Helicase ATP-binding domain. Leucine 144–threonine 151 contacts ATP. The short motif at aspartate 251–histidine 254 is the DECH box element. The region spanning glutamine 475 to serine 629 is the Helicase C-terminal domain. Positions serine 656 to aspartate 748 constitute a Dicer dsRNA-binding fold domain. The region spanning leucine 932–isoleucine 1054 is the PAZ domain. 2 RNase III domains span residues glutamate 1083–glycine 1251 and leucine 1292–glycine 1436. Residues glutamate 1330, aspartate 1422, and glutamate 1425 each contribute to the Mg(2+) site. 2 consecutive DRBM domains span residues serine 1462–alanine 1528 and threonine 1621–histidine 1697.

It belongs to the helicase family. Dicer subfamily. Interacts with DRB4. The cofactor is Mg(2+). Mn(2+) serves as cofactor.

The protein localises to the nucleus. Its function is as follows. Ribonuclease (RNase) III involved in RNA-mediated post-transcriptional gene silencing (PTGS). Functions in the biogenesis of trans-acting small interfering RNAs (ta-siRNAs, derived from the TAS1, TAS2 or TAS3 endogenous transcripts) by cleaving small dsRNAs into 21-24 nucleotide ta-siRNAs. Functions with the dsRNA-binding protein DRB4 in ta-siRNAs processing. Acts in the RDR6/SGS3/DCL4/AGO7 ta-siRNA pathway involved in leaf developmental timing. Plays a role in transitive silencing of transgenes by processing secondary siRNAs. This pathway, which requires DCL2 and RDR6, amplifies silencing by using the target RNA as substrate to generate secondary siRNAs, providing an efficient mechanism for long-distance silencing. Required for the production of the 30-40 nucleotide bacterial-induced long siRNAs (lsiRNA). May participate with DCL3 in the production of 24 nucleotide repeat-associated siRNAs (ra-siRNAs) which derive from heterochromatin and DNA repeats such as transposons. Plays an important role in antiviral RNA silencing. Involved in the production of viral siRNAs derived from the cucumber mosaic virus (CMV), turnip crinkle virus (TCV) and tobacco rattle virus (TRV). Targeted by the viral silencing suppressor (VSR) protein 2b of the cucumber mosaic virus (CMV) that inactivates DCL4 function in RNA silencing. Does not seem to be involved in microRNAs (miRNAs) processing. This Arabidopsis thaliana (Mouse-ear cress) protein is Dicer-like protein 4 (DCL4).